Consider the following 536-residue polypeptide: Pre-mRNA 3'-end-processing factor FIP1 (536 aa).

Basic and acidic residues-rich tracts occupy residues 1–10 and 32–42; these read MSAGEVERLV and VHVHSDLAKDL. Disordered regions lie at residues 1–95, 212–246, and 300–536; these read MSAG…EDDV, VQQG…GLPP, and FPPG…APAE. The sufficient for interaction with PAPOLA stretch occupies residues 1–110; sequence MSAGEVERLV…DIKTGAPQYG (110 aa). The tract at residues 1–296 is necessary for stimulating PAPOLA activity; that stretch reads MSAGEVERLV…TEVDNNFSKP (296 aa). 2 stretches are compositionally biased toward acidic residues: residues 43 to 54 and 80 to 94; these read DENEVERPEEEN and TEDD…DEDD. Phosphoserine occurs at positions 84, 86, and 88. The tract at residues 136–219 is sufficient for interaction with CPSF4; it reads KGVDLDAPGS…ITVQQGRTGN (84 aa). A compositionally biased stretch (pro residues) spans 300–344; that stretch reads FPPGAPPTHLPPPPFLPPPPTVSTAPPLIPPPGFPPPPGAPPPSL. Tyr-366 bears the Phosphotyrosine mark. A compositionally biased stretch (polar residues) spans 374 to 390; sequence LTSSAPSWPSLVDTTKQ. Positions 383–536 are sufficient for interaction with CPSF1 and CSTF3; it reads SLVDTTKQWD…QESTEAAPAE (154 aa). The segment covering 394 to 434 has biased composition (basic and acidic residues); it reads YARREKDRDRDRERDRDRERERDRDRERERTRERERERDHS. An arg/Asp/Glu-rich domain region spans residues 397–432; it reads REKDRDRDRERDRDRERERDRDRERERTRERERERD. At Ser-434 the chain carries Phosphoserine. At Thr-436 the chain carries Phosphothreonine. Phosphoserine is present on residues Ser-438 and Ser-442. Residues 443-470 show a composition bias toward basic and acidic residues; sequence DEERYRYREYAERGYERHRASREKEERH. The segment covering 484–493 has biased composition (basic residues); the sequence is KSSRSNSRRR. Ser-496 carries the post-translational modification Phosphoserine. Basic residues predominate over residues 502–512; that stretch reads HRRHKHKKSKR.

The protein belongs to the FIP1 family. As to quaternary structure, component of the cleavage and polyadenylation specificity factor (CPSF) complex, composed of CPSF1, CPSF2, CPSF3, CPSF4 and FIP1L1. Found in a complex with CPSF1, FIP1L1 and PAPOLA. Interacts with CPSF1, CPSF4, CSTF2 and CSTF3. Interacts with AHCYL1 (when phosphorylated); the interaction is direct and associates AHCYL1 with the CPSF complex and RNA. Interacts with PAPOLA; the interaction seems to be increased by the interaction with AHCYL1. Interacts with NUDT21/CPSF5; this interaction occurs in a RNA sequence-specific manner. Interacts (preferentially via unphosphorylated form and Arg/Glu/Asp-rich domain) with CPSF6 (via Arg/Ser-rich domain); this interaction mediates, at least in part, the interaction between the CFIm and CPSF complexes and may be inhibited by CPSF6 hyper-phosphorylation. Interacts (preferentially via unphosphorylated form and Arg/Asp/Glu-rich domain) with CPSF7 (via Arg/Ser-rich domain); this interaction mediates, at least in part, the interaction between the CFIm and CPSF complexes and may be inhibited by CPSF7 hyper-phosphorylation.

Its subcellular location is the nucleus. Functionally, component of the cleavage and polyadenylation specificity factor (CPSF) complex that plays a key role in pre-mRNA 3'-end formation, recognizing the AAUAAA signal sequence and interacting with poly(A) polymerase and other factors to bring about cleavage and poly(A) addition. FIP1L1 contributes to poly(A) site recognition and stimulates poly(A) addition. Binds to U-rich RNA sequence elements surrounding the poly(A) site. May act to tether poly(A) polymerase to the CPSF complex. The sequence is that of Pre-mRNA 3'-end-processing factor FIP1 (Fip1l1) from Rattus norvegicus (Rat).